Consider the following 392-residue polypeptide: Formate-dependent phosphoribosylglycinamide formyltransferase (392 aa).

N(1)-(5-phospho-beta-D-ribosyl)glycinamide-binding positions include 22–23 (EL) and glutamate 82. ATP contacts are provided by residues arginine 114, lysine 155, 160–165 (SSGKGQ), 195–198 (EGLV), and glutamate 203. Residues 119 to 308 (RLAAETLSLP…EFALHVRAFL (190 aa)) form the ATP-grasp domain. Mg(2+) contacts are provided by glutamate 267 and glutamate 279. N(1)-(5-phospho-beta-D-ribosyl)glycinamide contacts are provided by residues aspartate 286, lysine 355, and 362–363 (RR).

The protein belongs to the PurK/PurT family. In terms of assembly, homodimer.

It carries out the reaction N(1)-(5-phospho-beta-D-ribosyl)glycinamide + formate + ATP = N(2)-formyl-N(1)-(5-phospho-beta-D-ribosyl)glycinamide + ADP + phosphate + H(+). It participates in purine metabolism; IMP biosynthesis via de novo pathway; N(2)-formyl-N(1)-(5-phospho-D-ribosyl)glycinamide from N(1)-(5-phospho-D-ribosyl)glycinamide (formate route): step 1/1. Functionally, involved in the de novo purine biosynthesis. Catalyzes the transfer of formate to 5-phospho-ribosyl-glycinamide (GAR), producing 5-phospho-ribosyl-N-formylglycinamide (FGAR). Formate is provided by PurU via hydrolysis of 10-formyl-tetrahydrofolate. The sequence is that of Formate-dependent phosphoribosylglycinamide formyltransferase from Sodalis glossinidius (strain morsitans).